The chain runs to 416 residues: Adipocyte plasma membrane-associated protein (416 aa).

The disordered stretch occupies residues 1–32; that stretch reads MSEADGLRQRRPLRPQVVTDDDGQAPEAKDGS. An N-acetylserine modification is found at S2. Over 2-40 the chain is Cytoplasmic; the sequence is SEADGLRQRRPLRPQVVTDDDGQAPEAKDGSSFSGRVFR. Position 19 is a phosphothreonine (T19). The chain crosses the membrane as a helical; Signal-anchor for type II membrane protein span at residues 41–61; sequence VTFLMLAVSLTVPLLGAMMLL. The Extracellular segment spans residues 62–416; it reads ESPIDPQPLS…FLCRLSLQAV (355 aa). Residues N160 and N196 are each glycosylated (N-linked (GlcNAc...) asparagine).

This sequence belongs to the strictosidine synthase family. In terms of tissue distribution, liver, glomerular and tubular structures of the kidney, endothelial cells, arterial wall and pancreatic islets of Langerhans (at protein level). Found ubiquitously in adult as well as in embryonic tissues. In adult tissue, the highest expression is found in the liver, placenta and heart. Found on the cell surface of monocytes. In embryonic tissue, the highest expression levels is found in the liver and the kidney.

Its subcellular location is the membrane. Exhibits strong arylesterase activity with beta-naphthyl acetate and phenyl acetate. May play a role in adipocyte differentiation. The chain is Adipocyte plasma membrane-associated protein (APMAP) from Homo sapiens (Human).